The primary structure comprises 183 residues: NEDD8-conjugating enzyme Ubc12 (183 aa).

Position 1 is an N-acetylmethionine (Met-1). Positions 1-28 (MIKLFSLKQQKKEEESAGGTKGSSKKAS) are disordered. The UBC core domain occupies 29 to 173 (AAQLRIQKDI…VQRSMRGGYI (145 aa)). Cys-111 functions as the Glycyl thioester intermediate in the catalytic mechanism.

It belongs to the ubiquitin-conjugating enzyme family. UBC12 subfamily. In terms of processing, the acetylation of Met-1 increases affinity for DCUN1D1 by about 2 orders of magnitude and is crucial for NEDD8 transfer to cullins.

It carries out the reaction [E1 NEDD8-activating enzyme]-S-[NEDD8 protein]-yl-L-cysteine + [E2 NEDD8-conjugating enzyme]-L-cysteine = [E1 NEDD8-activating enzyme]-L-cysteine + [E2 NEDD8-conjugating enzyme]-S-[NEDD8-protein]-yl-L-cysteine.. It functions in the pathway protein modification; protein neddylation. In terms of biological role, accepts the ubiquitin-like protein NEDD8 from the UBA3-NAE1 E1 complex and catalyzes its covalent attachment to other proteins. The specific interaction with the E3 ubiquitin ligase rbx1, but not rbx2, suggests that the rbx1-ube2m complex neddylates specific target proteins, such as cul1, cul2, cul3 and cul4. Involved in cell proliferation. This chain is NEDD8-conjugating enzyme Ubc12 (ube2m), found in Xenopus tropicalis (Western clawed frog).